The following is a 253-amino-acid chain: Sporulation initiation inhibitor protein Soj (253 aa).

ATP is bound by residues K11, G12, G13, V14, G15, K16, T17, T18, P214, and N216. T17 is a binding site for Mg(2+).

Belongs to the ParA family. As to quaternary structure, dimerizes in the presence of ATP but not ADP; ATP-binding is required for double-stranded (ds)DNA-binding. Interacts with DnaA.

It is found in the cytoplasm. It carries out the reaction ATP + H2O = ADP + phosphate + H(+). In terms of biological role, acts as a spatially regulated molecular switch, capable of either inhibiting or activating the ability of DnaA to initiate DNA replication. Monomeric ADP-Soj inhibits oligomerization of DnaA on single-stranded (ss)- or double-stranded (ds)DNA, thus inhibiting DNA replication initiation; does not disassemble premade DnaA-DNA filaments. Decreases the residence time of DnaA on the chromosome at its binding sites (oriC, replication forks and (probably) promoter-binding sites). Soj forms nucleoprotein filaments in an ATP- and DNA-dependent manner. Inhibits the initiation of sporulation, Spo0J antagonizes this inhibition. Soj ultimately inhibits the activation (phosphorylation) of Spo0A. This chain is Sporulation initiation inhibitor protein Soj, found in Bacillus subtilis (strain 168).